Reading from the N-terminus, the 487-residue chain is GTPase Der (487 aa).

2 consecutive EngA-type G domains span residues 3–167 (FTLA…EGFA) and 203–378 (LQIA…DIWN). Residues 9–16 (GRPNVGKS), 56–60 (DTAGL), 119–122 (NKAE), 209–216 (GRPNAGKS), 256–260 (DTAGM), and 321–324 (NKWD) contribute to the GTP site. The 85-residue stretch at 379-463 (RRITTARLNS…PIRLTMRGQG (85 aa)) folds into the KH-like domain. The segment at 459-487 (MRGQGDKNPFKERKFRTPSRLRKHLGKKG) is disordered. The span at 471–487 (RKFRTPSRLRKHLGKKG) shows a compositional bias: basic residues.

Belongs to the TRAFAC class TrmE-Era-EngA-EngB-Septin-like GTPase superfamily. EngA (Der) GTPase family. As to quaternary structure, associates with the 50S ribosomal subunit.

In terms of biological role, GTPase that plays an essential role in the late steps of ribosome biogenesis. The polypeptide is GTPase Der (Cereibacter sphaeroides (strain ATCC 17025 / ATH 2.4.3) (Rhodobacter sphaeroides)).